A 571-amino-acid chain; its full sequence is Urease subunit alpha (571 aa).

The Urease domain maps to 133–571 (GGIDTHVHFV…LPLTQRYFLF (439 aa)). Residues H138, H140, and K221 each contribute to the Ni(2+) site. At K221 the chain carries N6-carboxylysine. H223 is a substrate binding site. Residues H250 and H276 each coordinate Ni(2+). The Proton donor role is filled by H324. Residue D364 coordinates Ni(2+).

It belongs to the metallo-dependent hydrolases superfamily. Urease alpha subunit family. In terms of assembly, heterotrimer of UreA (gamma), UreB (beta) and UreC (alpha) subunits. Three heterotrimers associate to form the active enzyme. Ni cation serves as cofactor. Carboxylation allows a single lysine to coordinate two nickel ions.

The protein resides in the cytoplasm. The enzyme catalyses urea + 2 H2O + H(+) = hydrogencarbonate + 2 NH4(+). It participates in nitrogen metabolism; urea degradation; CO(2) and NH(3) from urea (urease route): step 1/1. This is Urease subunit alpha from Staphylococcus xylosus.